Reading from the N-terminus, the 72-residue chain is DNA-directed RNA polymerase subunit omega (72 aa).

The protein belongs to the RNA polymerase subunit omega family. In terms of assembly, the RNAP catalytic core consists of 2 alpha, 1 beta, 1 beta' and 1 omega subunit. When a sigma factor is associated with the core the holoenzyme is formed, which can initiate transcription.

The enzyme catalyses RNA(n) + a ribonucleoside 5'-triphosphate = RNA(n+1) + diphosphate. Functionally, promotes RNA polymerase assembly. Latches the N- and C-terminal regions of the beta' subunit thereby facilitating its interaction with the beta and alpha subunits. In Clostridium botulinum (strain Loch Maree / Type A3), this protein is DNA-directed RNA polymerase subunit omega.